Reading from the N-terminus, the 209-residue chain is Glutathione S-transferase 1, isoform C (209 aa).

Residues 1 to 80 (MDFYYLPGSA…YLAEKYGKDD (80 aa)) form the GST N-terminal domain. Glutathione-binding positions include S9, 50 to 52 (HCI), and 64 to 66 (ESR). The 122-residue stretch at 86-207 (DPQKRAVVNQ…AGIEEFKKYF (122 aa)) folds into the GST C-terminal domain.

The protein belongs to the GST superfamily. Theta family. As to quaternary structure, homodimer.

It catalyses the reaction RX + glutathione = an S-substituted glutathione + a halide anion + H(+). It carries out the reaction 1,1,1-trichloro-2,2-bis(4-chlorophenyl)ethane = 1,1-dichloro-2,2-bis(4-chlorophenyl)ethylene + chloride + H(+). In terms of biological role, conjugation of reduced glutathione to a wide number of exogenous and endogenous hydrophobic electrophiles. Has DDT dehydrochlorinase activity. In Anopheles gambiae (African malaria mosquito), this protein is Glutathione S-transferase 1, isoform C (GstD1).